We begin with the raw amino-acid sequence, 20 residues long: Calreticulin (20 aa).

The protein belongs to the calreticulin family. Glycosylated.

The protein localises to the endoplasmic reticulum lumen. Functionally, molecular calcium-binding chaperone promoting folding, oligomeric assembly and quality control in the ER via the calreticulin/calnexin cycle. This lectin may interact transiently with almost all of the monoglucosylated glycoproteins that are synthesized in the ER. The sequence is that of Calreticulin from Spinacia oleracea (Spinach).